A 268-amino-acid chain; its full sequence is NADH-quinone oxidoreductase subunit B 2 (268 aa).

[4Fe-4S] cluster is bound by residues cysteine 42, cysteine 43, cysteine 108, and cysteine 138. Residues 237–268 are disordered; it reads SPNKAKGVAPEIRHNDLKRPAVEVDHARDEQR. Basic and acidic residues predominate over residues 247-268; the sequence is EIRHNDLKRPAVEVDHARDEQR.

It belongs to the complex I 20 kDa subunit family. NDH-1 is composed of 14 different subunits. Subunits NuoB, C, D, E, F, and G constitute the peripheral sector of the complex. [4Fe-4S] cluster serves as cofactor.

The protein localises to the cell membrane. The catalysed reaction is a quinone + NADH + 5 H(+)(in) = a quinol + NAD(+) + 4 H(+)(out). In terms of biological role, NDH-1 shuttles electrons from NADH, via FMN and iron-sulfur (Fe-S) centers, to quinones in the respiratory chain. The immediate electron acceptor for the enzyme in this species is believed to be ubiquinone. Couples the redox reaction to proton translocation (for every two electrons transferred, four hydrogen ions are translocated across the cytoplasmic membrane), and thus conserves the redox energy in a proton gradient. This chain is NADH-quinone oxidoreductase subunit B 2, found in Roseiflexus castenholzii (strain DSM 13941 / HLO8).